Here is a 161-residue protein sequence, read N- to C-terminus: Putative 4-hydroxy-4-methyl-2-oxoglutarate aldolase (161 aa).

Substrate-binding positions include 75 to 78 (GDML) and arginine 97. Aspartate 98 contacts a divalent metal cation.

This sequence belongs to the class II aldolase/RraA-like family. In terms of assembly, homotrimer. A divalent metal cation serves as cofactor.

The enzyme catalyses 4-hydroxy-4-methyl-2-oxoglutarate = 2 pyruvate. It carries out the reaction oxaloacetate + H(+) = pyruvate + CO2. Catalyzes the aldol cleavage of 4-hydroxy-4-methyl-2-oxoglutarate (HMG) into 2 molecules of pyruvate. Also contains a secondary oxaloacetate (OAA) decarboxylase activity due to the common pyruvate enolate transition state formed following C-C bond cleavage in the retro-aldol and decarboxylation reactions. This is Putative 4-hydroxy-4-methyl-2-oxoglutarate aldolase from Marinomonas sp. (strain MWYL1).